A 342-amino-acid polypeptide reads, in one-letter code: Holliday junction branch migration complex subunit RuvB (342 aa).

A large ATPase domain (RuvB-L) region spans residues 1 to 179 (MTNILSPEKS…FGIPMRLNFY (179 aa)). Residues Ile18, Arg19, Gly60, Lys63, Thr64, Thr65, 126–128 (EDF), Arg169, Tyr179, and Arg216 each bind ATP. Thr64 contacts Mg(2+). Residues 180–250 (NTEELKKVLN…ISDFGLNRLE (71 aa)) form a small ATPAse domain (RuvB-S) region. The interval 253–342 (CIGLDSNDYR…HQFNIFNENE (90 aa)) is head domain (RuvB-H). 3 residues coordinate DNA: Arg289, Arg308, and Arg313.

This sequence belongs to the RuvB family. As to quaternary structure, homohexamer. Forms an RuvA(8)-RuvB(12)-Holliday junction (HJ) complex. HJ DNA is sandwiched between 2 RuvA tetramers; dsDNA enters through RuvA and exits via RuvB. An RuvB hexamer assembles on each DNA strand where it exits the tetramer. Each RuvB hexamer is contacted by two RuvA subunits (via domain III) on 2 adjacent RuvB subunits; this complex drives branch migration. In the full resolvosome a probable DNA-RuvA(4)-RuvB(12)-RuvC(2) complex forms which resolves the HJ.

It is found in the cytoplasm. It catalyses the reaction ATP + H2O = ADP + phosphate + H(+). The RuvA-RuvB-RuvC complex processes Holliday junction (HJ) DNA during genetic recombination and DNA repair, while the RuvA-RuvB complex plays an important role in the rescue of blocked DNA replication forks via replication fork reversal (RFR). RuvA specifically binds to HJ cruciform DNA, conferring on it an open structure. The RuvB hexamer acts as an ATP-dependent pump, pulling dsDNA into and through the RuvAB complex. RuvB forms 2 homohexamers on either side of HJ DNA bound by 1 or 2 RuvA tetramers; 4 subunits per hexamer contact DNA at a time. Coordinated motions by a converter formed by DNA-disengaged RuvB subunits stimulates ATP hydrolysis and nucleotide exchange. Immobilization of the converter enables RuvB to convert the ATP-contained energy into a lever motion, pulling 2 nucleotides of DNA out of the RuvA tetramer per ATP hydrolyzed, thus driving DNA branch migration. The RuvB motors rotate together with the DNA substrate, which together with the progressing nucleotide cycle form the mechanistic basis for DNA recombination by continuous HJ branch migration. Branch migration allows RuvC to scan DNA until it finds its consensus sequence, where it cleaves and resolves cruciform DNA. The chain is Holliday junction branch migration complex subunit RuvB from Rickettsia africae (strain ESF-5).